We begin with the raw amino-acid sequence, 306 residues long: CRISPR-associated endonuclease Cas1 (306 aa).

The Mn(2+) site is built by E143, H210, and D223.

It belongs to the CRISPR-associated endonuclease Cas1 family. As to quaternary structure, homodimer, forms a heterotetramer with a Cas2 homodimer. The cofactor is Mg(2+). Requires Mn(2+) as cofactor.

Its function is as follows. CRISPR (clustered regularly interspaced short palindromic repeat), is an adaptive immune system that provides protection against mobile genetic elements (viruses, transposable elements and conjugative plasmids). CRISPR clusters contain spacers, sequences complementary to antecedent mobile elements, and target invading nucleic acids. CRISPR clusters are transcribed and processed into CRISPR RNA (crRNA). Acts as a dsDNA endonuclease. Involved in the integration of spacer DNA into the CRISPR cassette. The sequence is that of CRISPR-associated endonuclease Cas1 from Geobacter sulfurreducens (strain ATCC 51573 / DSM 12127 / PCA).